A 1374-amino-acid chain; its full sequence is MDISSFLLPQLLRKYQQDVYNIASKQNTLLVMRTGAGKTLLAVKLIKQKLEEQILIQESNLEHKKISVFLVNKVPLVFQQAEYIRSQLPAKVGMFYGELSIEMSEQLLTNIILKYNVIVITADLFYLFLARGFLSINDLNLIIFDECHHAIGNDAYARIMNDFYHRAKAVLSKKHFTLPRIFGMTASPFTGKKGNLYHRLYQWEQLFDSKAHVVSENELADYFCLPEESYVMYSNKLVVPPSDSIIKKCEETLQGCKLISRAVKTALAETIDMGLWFGEQVWLYLVDFVETKRLKKKALGKQLSDDEELAIDRLKIFVEDWKNNKYSDNGPRIPVFDSTDVTDKVFKLLELLKATYRKSDSVRTVIFVERKATAFTLSLFMKTLNLPNIRAHSFIGHGPSDQGEFSMTFRRQKDTLHKFKTGKYNVLIATAVAEEGIDVPSCNLVIRFNICRTVTQYVQSRGRARAMASKFLIFLNTEELLIHERILHEEKNLKFALSELSNSNIFDSLVCEERERVTDDIVYEVGETGALLTGLYAVSLLYNFCNTLSRDVYTRYYPTFTAQPCLSGWYCFEVELPKACKVPAAQGSPAKSIRKAKQNAAFIMCLDLIRMGLIDKHLKPLDFRRKIADLETLEEDELKDEGYIETYERYVPKSWMKVPEDITRCFVSLLYTDANEGDNHIFHPLVFVQAHSFPKIDSFILNSTVGPRVKIVLETIEDSFKIDSHLLELLKKSTRYLLQFGLSTSLEQQIPTPYWLAPLNLSCTDYRFLENLIDVDTIQNFFKLPEPVQNVTDLQSDTVLLVNPQSIYEQYAFEGFVNSEFMIPAKKKDKAPSALCKKLPLRLNYSLWGNRAKSIPKSQQVRSFYINDLYILPVSRHLKNSALLIPSILYHIENLLVASSFIEHFRLDCKIDTACQALTSAESQLNFDYDRLEFYGDCFLKLGASITVFLKFPDTQEYQLHFNRKKIISNCNLYKVAIDCELPKYALSTPLEIRHWCPYGFQKSTSDKCRYAVLQKLSVKRIADMVEASIGACLLDSGLDSALKICKSLSVGLLDISNWDEWNNYFDLNTYADSLRNVQFPYSSYIEETIGYSFKNKKLLHLAFIHPSMMSQQGIYENYQQLEFLGDAVLDYIIVQYLYKKYPNATSGELTDYKSFYVCNKSLSYIGFVLNLHKYIQHESAAMCDAIFEYQELIEAFRETASENPWFWFEIDSPKFISDTLEAMICAIFLDSGFSLQSLQFVLPLFLNSLGDATHTKAKGDIEHKVYQLLKDQGCEDFGTKCVIEEVKSSHKTLLNTELHLTKYYGFSFFRHGNIVAYGKSRKVANAKYIMKQRLLKLLEDKSNLLLYSCNCKFSKKKPSDEQIKGDGKVKSLT.

The 188-residue stretch at 19 to 206 (VYNIASKQNT…YHRLYQWEQL (188 aa)) folds into the Helicase ATP-binding domain. 32 to 39 (MRTGAGKT) is a binding site for ATP. The short motif at 145–148 (DECH) is the DECH box element. The Helicase C-terminal domain maps to 340–517 (DVTDKVFKLL…SLVCEERERV (178 aa)). In terms of domain architecture, Dicer dsRNA-binding fold spans 537-628 (AVSLLYNFCN…KPLDFRRKIA (92 aa)). 2 consecutive RNase III domains span residues 916-1038 (QALT…LDSG) and 1083-1233 (SSYI…LDSG). Positions 1123, 1219, and 1222 each coordinate Mg(2+). The tract at residues 1263–1355 (EHKVYQLLKD…LLYSCNCKFS (93 aa)) is C-terminal dsRNA-binding fold. Residues cysteine 1275, histidine 1312, cysteine 1350, and cysteine 1352 each contribute to the Zn(2+) site.

This sequence belongs to the helicase family. Dicer subfamily. Mg(2+) is required as a cofactor. Mn(2+) serves as cofactor.

The protein resides in the cytoplasm. It localises to the nucleus. Required for G1 arrest and mating in response to nitrogen starvation. Ago1 regulation of cytokinesis and cell cycle checkpoints occurs downstream of dcr1. Required, indirectly, for regulated hyperphosphorylation of cdc2. Its function is as follows. Has a role in the RNA interference (RNAi) pathway which is important for heterochromatin formation, accurate chromosome segregation, centromere cohesion and telomere function during mitosis and meiosis. Digests double-stranded RNA (dsRNA) producing 21 to 23 bp dsRNAs, so-called interfering RNAs (siRNA). Required for both post-transcriptional and transcriptional gene silencing. Required for silencing at the centromeres and for initiation of transcriptionally silent heterochromatin at the mating type locus. Promotes histone H3 'Lys-10' methylation necessary for centromere function. Required for recruitment of swi6 and cohesin to an ectopic dg repeat. The sequence is that of Protein Dicer (dcr1) from Schizosaccharomyces pombe (strain 972 / ATCC 24843) (Fission yeast).